The primary structure comprises 378 residues: Glutamate 5-kinase (378 aa).

K21 is an ATP binding site. Substrate contacts are provided by S61, D148, and N160. 180–181 (TD) is a binding site for ATP. One can recognise a PUA domain in the interval 286–364 (RGTLVLDAGA…RRIEELLGYM (79 aa)).

This sequence belongs to the glutamate 5-kinase family.

It localises to the cytoplasm. The enzyme catalyses L-glutamate + ATP = L-glutamyl 5-phosphate + ADP. It participates in amino-acid biosynthesis; L-proline biosynthesis; L-glutamate 5-semialdehyde from L-glutamate: step 1/2. In terms of biological role, catalyzes the transfer of a phosphate group to glutamate to form L-glutamate 5-phosphate. The chain is Glutamate 5-kinase from Chromohalobacter salexigens (strain ATCC BAA-138 / DSM 3043 / CIP 106854 / NCIMB 13768 / 1H11).